The primary structure comprises 121 residues: uncharacterized protein (121 aa).

This is an uncharacterized protein from Escherichia coli (strain K12).